A 215-amino-acid chain; its full sequence is 7-methyl-GTP pyrophosphatase (215 aa).

The Proton acceptor role is filled by Asp-79.

The protein belongs to the Maf family. YceF subfamily. A divalent metal cation is required as a cofactor.

The protein resides in the cytoplasm. The enzyme catalyses N(7)-methyl-GTP + H2O = N(7)-methyl-GMP + diphosphate + H(+). Functionally, nucleoside triphosphate pyrophosphatase that hydrolyzes 7-methyl-GTP (m(7)GTP). May have a dual role in cell division arrest and in preventing the incorporation of modified nucleotides into cellular nucleic acids. In Burkholderia thailandensis (strain ATCC 700388 / DSM 13276 / CCUG 48851 / CIP 106301 / E264), this protein is 7-methyl-GTP pyrophosphatase.